Consider the following 325-residue polypeptide: RNA ligase 1 (325 aa).

The cofactor is Mg(2+). It depends on Mn(2+) as a cofactor. In terms of processing, AMPylates itself (auto-AMPylation).

It carries out the reaction ATP + (ribonucleotide)n-3'-hydroxyl + 5'-phospho-(ribonucleotide)m = (ribonucleotide)n+m + AMP + diphosphate.. In terms of biological role, functions as an RNA ligase, in vitro. The ligation reaction entails three nucleotidyl transfer steps. In the first step, the RNA ligase reacts with ATP in the absence of nucleic acid to form a covalent ligase-AMP intermediate and release pyrophosphate. In step 2, the ligase-AMP binds to the nucleic acid and transfers the adenylate to the 5'-PO4 terminus to form an adenylylated intermediate. In step 3, the RNA ligase directs the attack of the 3'-OH on the 5'-phosphoanhydride linkage, resulting in a repaired 3'-5' phosphodiester and release of AMP. Exhibits selectivity for single-stranded RNA substrates and may not have nick-sealing activity on double-stranded DNA-RNA hybrids. May play a role in maintaining RNA integrity under stress conditions, for example in response to reactive oxygen species (ROS). The sequence is that of RNA ligase 1 from Rattus norvegicus (Rat).